The following is a 433-amino-acid chain: Glutamate-1-semialdehyde 2,1-aminomutase (433 aa).

Lys272 is modified (N6-(pyridoxal phosphate)lysine).

This sequence belongs to the class-III pyridoxal-phosphate-dependent aminotransferase family. HemL subfamily. As to quaternary structure, homodimer. Requires pyridoxal 5'-phosphate as cofactor.

The protein localises to the cytoplasm. The enzyme catalyses (S)-4-amino-5-oxopentanoate = 5-aminolevulinate. The protein operates within porphyrin-containing compound metabolism; protoporphyrin-IX biosynthesis; 5-aminolevulinate from L-glutamyl-tRNA(Glu): step 2/2. The chain is Glutamate-1-semialdehyde 2,1-aminomutase from Methylacidiphilum infernorum (isolate V4) (Methylokorus infernorum (strain V4)).